The sequence spans 214 residues: A-type ATP synthase subunit D (214 aa).

Belongs to the V-ATPase D subunit family. Has multiple subunits with at least A(3), B(3), C, D, E, F, H, I and proteolipid K(x).

It is found in the cell membrane. In terms of biological role, component of the A-type ATP synthase that produces ATP from ADP in the presence of a proton gradient across the membrane. In Thermococcus gammatolerans (strain DSM 15229 / JCM 11827 / EJ3), this protein is A-type ATP synthase subunit D.